A 285-amino-acid polypeptide reads, in one-letter code: MQLLDGKALSAKIETTVAKEVKELKNSTNLVPGLAVILVGQDPASAAYVNMKKKACDRVGFYSVTHEMPSDISQSAIENTITMMNNNPNIDGILIQLPLPTQIDTTKILELVEPSKDVDGFHPYNVGRLTTGLDGFVPCTPLGVMELLKEYKIDVKGKNCVVVGASNIVGKPMAALLLNANATVEICHIFTDDLKKHTLAADMIFVGAGVINLIKEDMVKGGAIIVDIGINRAESGKLVGDVDFENVAKKCSFITPVPGGVGPMTIAMLLSNTLKAAKAHAKENE.

NADP(+)-binding positions include 164–166 (GAS), isoleucine 189, and isoleucine 230.

The protein belongs to the tetrahydrofolate dehydrogenase/cyclohydrolase family. Homodimer.

It catalyses the reaction (6R)-5,10-methylene-5,6,7,8-tetrahydrofolate + NADP(+) = (6R)-5,10-methenyltetrahydrofolate + NADPH. The enzyme catalyses (6R)-5,10-methenyltetrahydrofolate + H2O = (6R)-10-formyltetrahydrofolate + H(+). The protein operates within one-carbon metabolism; tetrahydrofolate interconversion. Catalyzes the oxidation of 5,10-methylenetetrahydrofolate to 5,10-methenyltetrahydrofolate and then the hydrolysis of 5,10-methenyltetrahydrofolate to 10-formyltetrahydrofolate. The sequence is that of Bifunctional protein FolD from Sulfurimonas denitrificans (strain ATCC 33889 / DSM 1251) (Thiomicrospira denitrificans (strain ATCC 33889 / DSM 1251)).